Reading from the N-terminus, the 140-residue chain is Tumor protein D55 (140 aa).

The disordered stretch occupies residues 1–28; sequence MPHARTETSVGTYESHSTSELEDLTEPE. Polar residues predominate over residues 7–18; sequence ETSVGTYESHST. Residues 28–57 are a coiled coil; that stretch reads EQRELKTKLTKLEAEIVTLRHVLAAKERRC.

The protein belongs to the TPD52 family. As to quaternary structure, interacts with TPD52L2. As to expression, specifically expressed in testis. Expressed at 5.6-fold higher levels in adult testis than in fetal testis.

This is Tumor protein D55 (TPD52L3) from Homo sapiens (Human).